The sequence spans 265 residues: HUWE1-associated protein modifying stress responses (265 aa).

Disordered regions lie at residues 1–22 (MEDK…HWFS), 145–170 (RNSR…GSSV), 195–218 (VRSS…RRNG), and 240–265 (GTRK…NRMI). Polar residues-rich tracts occupy residues 156-170 (VSPN…GSSV) and 195-212 (VRSS…SSNT).

Belongs to the HAPSTR1 family. In terms of assembly, oligomer.

The protein localises to the nucleus. It localises to the cytoplasm. In terms of biological role, acts as a central player within a network of stress response pathways promoting cellular adaptability. Functions as a negative regulator of TP53/P53 in the cellular response to telomere erosion and probably also DNA damage. This chain is HUWE1-associated protein modifying stress responses, found in Xenopus tropicalis (Western clawed frog).